Here is a 464-residue protein sequence, read N- to C-terminus: Asparagine--tRNA ligase (464 aa).

This sequence belongs to the class-II aminoacyl-tRNA synthetase family. Homodimer.

Its subcellular location is the cytoplasm. It carries out the reaction tRNA(Asn) + L-asparagine + ATP = L-asparaginyl-tRNA(Asn) + AMP + diphosphate + H(+). The chain is Asparagine--tRNA ligase from Acetivibrio thermocellus (strain ATCC 27405 / DSM 1237 / JCM 9322 / NBRC 103400 / NCIMB 10682 / NRRL B-4536 / VPI 7372) (Clostridium thermocellum).